The following is a 154-amino-acid chain: Ascorbate-specific PTS system EIIA component (154 aa).

Positions 6-150 constitute a PTS EIIA type-2 domain; that stretch reads SLAENKSIRL…QEVLDLIDRT (145 aa). His-68 acts as the Tele-phosphohistidine intermediate in catalysis. His-68 bears the Phosphohistidine mark.

It localises to the cytoplasm. Its function is as follows. The phosphoenolpyruvate-dependent sugar phosphotransferase system (sugar PTS), a major carbohydrate active transport system, catalyzes the phosphorylation of incoming sugar substrates concomitantly with their translocation across the cell membrane. The enzyme II UlaABC PTS system is involved in ascorbate transport. The protein is Ascorbate-specific PTS system EIIA component (ulaC) of Escherichia coli O157:H7.